Here is an 896-residue protein sequence, read N- to C-terminus: Alanine--tRNA ligase (896 aa).

Zn(2+)-binding residues include H581, H585, C684, and H688.

The protein belongs to the class-II aminoacyl-tRNA synthetase family. It depends on Zn(2+) as a cofactor.

It is found in the cytoplasm. The catalysed reaction is tRNA(Ala) + L-alanine + ATP = L-alanyl-tRNA(Ala) + AMP + diphosphate. Functionally, catalyzes the attachment of alanine to tRNA(Ala) in a two-step reaction: alanine is first activated by ATP to form Ala-AMP and then transferred to the acceptor end of tRNA(Ala). Also edits incorrectly charged Ser-tRNA(Ala) and Gly-tRNA(Ala) via its editing domain. In Renibacterium salmoninarum (strain ATCC 33209 / DSM 20767 / JCM 11484 / NBRC 15589 / NCIMB 2235), this protein is Alanine--tRNA ligase.